A 629-amino-acid polypeptide reads, in one-letter code: ATP-dependent RNA helicase DeaD (629 aa).

The Q motif motif lies at 6–34 (TTFADLGLKAPILEALNDLGYEKPSPIQA). Positions 37 to 208 (IPHLLNGRDV…RRFMKEPQEV (172 aa)) constitute a Helicase ATP-binding domain. Position 50–57 (50–57 (AQTGSGKT)) interacts with ATP. Residues 156–159 (DEAD) carry the DEAD box motif. Residues 232 to 379 (KNEALVRFLE…EVELPNAELL (148 aa)) form the Helicase C-terminal domain. Disordered stretches follow at residues 438–481 (LIVP…RERR) and 560–629 (LGDA…GGDA). Composition is skewed to basic and acidic residues over residues 446 to 481 (MRPKREFRDRDDRGPRDRNDRGPRGDREDRPRRERR) and 568 to 629 (GGER…GGDA).

Belongs to the DEAD box helicase family. DeaD/CsdA subfamily. Interacts with the 50S ribosomal subunit upon shifting to 15 degrees Celsius. Also found associated with the RNA degradosome at 15 degrees Celsius; binds RNase E (rne).

Its subcellular location is the cytoplasm. The catalysed reaction is ATP + H2O = ADP + phosphate + H(+). DEAD-box RNA helicase involved in various cellular processes at low temperature, including ribosome biogenesis, mRNA degradation and translation initiation. Exhibits RNA-stimulated ATP hydrolysis and RNA unwinding activity at low temperature. Involved in 50S ribosomal subunit assembly, acting after SrmB, and could also play a role in the biogenesis of the 30S ribosomal subunit. In addition, is involved in mRNA decay, via formation of a cold-shock degradosome with RNase E. Also stimulates translation of some mRNAs, probably at the level of initiation. The chain is ATP-dependent RNA helicase DeaD from Escherichia coli (strain K12).